The chain runs to 213 residues: Outer-membrane lipoprotein carrier protein (213 aa).

Residues 1–18 form the signal peptide; that stretch reads MKYFATICIAAYAGLAGA.

The protein belongs to the LolA family. As to quaternary structure, monomer.

Its subcellular location is the periplasm. Participates in the translocation of lipoproteins from the inner membrane to the outer membrane. Only forms a complex with a lipoprotein if the residue after the N-terminal Cys is not an aspartate (The Asp acts as a targeting signal to indicate that the lipoprotein should stay in the inner membrane). The protein is Outer-membrane lipoprotein carrier protein of Albidiferax ferrireducens (strain ATCC BAA-621 / DSM 15236 / T118) (Rhodoferax ferrireducens).